The primary structure comprises 158 residues: SsrA-binding protein (158 aa).

The interval 135–158 (DKRKTLKDRDWERDKQRGFKKDLD) is disordered. Positions 141 to 158 (KDRDWERDKQRGFKKDLD) are enriched in basic and acidic residues.

The protein belongs to the SmpB family.

The protein localises to the cytoplasm. Required for rescue of stalled ribosomes mediated by trans-translation. Binds to transfer-messenger RNA (tmRNA), required for stable association of tmRNA with ribosomes. tmRNA and SmpB together mimic tRNA shape, replacing the anticodon stem-loop with SmpB. tmRNA is encoded by the ssrA gene; the 2 termini fold to resemble tRNA(Ala) and it encodes a 'tag peptide', a short internal open reading frame. During trans-translation Ala-aminoacylated tmRNA acts like a tRNA, entering the A-site of stalled ribosomes, displacing the stalled mRNA. The ribosome then switches to translate the ORF on the tmRNA; the nascent peptide is terminated with the 'tag peptide' encoded by the tmRNA and targeted for degradation. The ribosome is freed to recommence translation, which seems to be the essential function of trans-translation. The polypeptide is SsrA-binding protein (Psychrobacter cryohalolentis (strain ATCC BAA-1226 / DSM 17306 / VKM B-2378 / K5)).